The chain runs to 75 residues: Putative defensin-like protein 126 (75 aa).

The signal sequence occupies residues 1–24 (MSKSTFLFVYIILILGSMVNEIQG). Intrachain disulfides connect cysteine 29–cysteine 73, cysteine 38–cysteine 57, cysteine 43–cysteine 67, and cysteine 47–cysteine 69.

This sequence belongs to the DEFL family.

It is found in the secreted. The polypeptide is Putative defensin-like protein 126 (LCR6) (Arabidopsis thaliana (Mouse-ear cress)).